Reading from the N-terminus, the 348-residue chain is Dihydroorotase (348 aa).

The Zn(2+) site is built by His14 and His16. Substrate-binding positions include 16-18 and Asn42; that span reads HLR. Residues Lys100, His137, and His175 each coordinate Zn(2+). Lys100 carries the post-translational modification N6-carboxylysine. His137 serves as a coordination point for substrate. Leu220 is a substrate binding site. Position 248 (Asp248) interacts with Zn(2+). Residue Asp248 is part of the active site. Substrate-binding residues include His252 and Ala264.

The protein belongs to the metallo-dependent hydrolases superfamily. DHOase family. Class II DHOase subfamily. As to quaternary structure, homodimer. Zn(2+) serves as cofactor.

It carries out the reaction (S)-dihydroorotate + H2O = N-carbamoyl-L-aspartate + H(+). The protein operates within pyrimidine metabolism; UMP biosynthesis via de novo pathway; (S)-dihydroorotate from bicarbonate: step 3/3. In terms of biological role, catalyzes the reversible cyclization of carbamoyl aspartate to dihydroorotate. In Pseudomonas putida (strain GB-1), this protein is Dihydroorotase.